Here is a 417-residue protein sequence, read N- to C-terminus: C6 finger transcription factor traC (417 aa).

The disordered stretch occupies residues 1–40 (MNFSEQFTGRSEPGRKANRTSNNNTNSTTNVATVTTDDSN). Over residues 19-37 (RTSNNNTNSTTNVATVTTD) the composition is skewed to low complexity. The zn(2)-C6 fungal-type DNA-binding region spans 44–73 (CDRCKGQKLRCIWENGSNTCRRCTRARAVC). 2 disordered regions span residues 75-94 (QPRP…KHHV) and 104-128 (WVSS…DDHD). Residues 80 to 94 (PFGRPRCSTKSKHHV) are compositionally biased toward basic residues. Over residues 104–114 (WVSSTTQQPQE) the composition is skewed to polar residues.

Its subcellular location is the nucleus. Functionally, C6 finger transcription factor; part of the tra gene cluster that produces terrestric acid. The clavatol biosynthesis cluster cla and the terrestric acid cluster tra are both involved in the production of peniphenones and penilactones. This is C6 finger transcription factor traC from Penicillium crustosum (Blue mold fungus).